The primary structure comprises 459 residues: Exodeoxyribonuclease 7 large subunit (459 aa).

It belongs to the XseA family. In terms of assembly, heterooligomer composed of large and small subunits.

It localises to the cytoplasm. It carries out the reaction Exonucleolytic cleavage in either 5'- to 3'- or 3'- to 5'-direction to yield nucleoside 5'-phosphates.. Functionally, bidirectionally degrades single-stranded DNA into large acid-insoluble oligonucleotides, which are then degraded further into small acid-soluble oligonucleotides. This Pseudomonas fluorescens (strain SBW25) protein is Exodeoxyribonuclease 7 large subunit.